The sequence spans 378 residues: Diacetylchitobiose uptake system ATP-binding protein MsiK (378 aa).

The 233-residue stretch at 4–236 (VTFDKATRVY…PANLFVAGFI (233 aa)) folds into the ABC transporter domain. 38–45 (GPSGCGKS) contributes to the ATP binding site.

Belongs to the ABC transporter superfamily. As to quaternary structure, the DasABC-MsiK complex is composed of two ATP-binding proteins (MsiK), two transmembrane proteins (DasB and DasC) and a solute-binding protein (DasA). The NgcEFG-MsiK complex is composed of two ATP-binding proteins (MsiK), two transmembrane proteins (NgcF and NgcG) and a solute-binding protein (NgcE).

It is found in the cell membrane. In terms of biological role, part of the ABC transporter complexes DasABC-MsiK and NgcEFG-MsiK involved in N,N'-diacetylchitobiose ((GlcNAc)2) uptake. Responsible for energy coupling to the transport system. In Streptomyces coelicolor (strain ATCC BAA-471 / A3(2) / M145), this protein is Diacetylchitobiose uptake system ATP-binding protein MsiK.